Here is a 604-residue protein sequence, read N- to C-terminus: Protein CBFA2T1 (604 aa).

The segment at 32–114 (TEKHSTMPDS…SSSSLANQQL (83 aa)) is disordered. Serine 41 is modified (phosphoserine). The segment covering 63-86 (QGAPRTSSFTPTTLTNGTSHSPTA) has biased composition (polar residues). Residues 95–114 (NGFSNGPSSSSSSSLANQQL) are compositionally biased toward low complexity. The TAFH domain occupies 120-215 (ARQLSKLKRF…NPAQYLAQHE (96 aa)). The disordered stretch occupies residues 230–298 (SELLLDVNEN…LPHPTPPPPQ (69 aa)). Residues 238–264 (ENGKRRTPDRTKENGFDREPLHSEHPS) show a composition bias toward basic and acidic residues. Over residues 271–285 (SPGQRYSPNNGLSYQ) the composition is skewed to polar residues. Pro residues predominate over residues 289 to 298 (LPHPTPPPPQ). An important for oligomerization region spans residues 337 to 383 (QEEMIDHRLTDREWAEEWKHLDHLLNCIMDMVEKTRRSLTVLRRCQE). The interval 337–383 (QEEMIDHRLTDREWAEEWKHLDHLLNCIMDMVEKTRRSLTVLRRCQE) is nervy homology region 2 (NHR2). Residues 401 to 423 (DLKKGGGSSSSHSRQQSPVNPDP) form a disordered region. Serine 417 is subject to Phosphoserine. Residues 443–492 (EEIWKKAEEAVNEVKRQAMTELQKAVSEAERKAHDMITTERAKMERTVAE) are nervy homology region 3 (NHR3). Residues cysteine 515, cysteine 518, cysteine 526, cysteine 529, cysteine 535, cysteine 539, histidine 547, and cysteine 551 each contribute to the Zn(2+) site. The MYND-type zinc finger occupies 515 to 551 (CWNCGRKASETCSGCNTARYCGSFCQHKDWEKHHHIC). Positions 557–576 (AQQQGDTPAVSSSVTPNSGA) are enriched in polar residues. The interval 557–604 (AQQQGDTPAVSSSVTPNSGAGSPMDTPPAATPRSTTPGTPSTIETTPR) is disordered. The segment covering 587 to 604 (TPRSTTPGTPSTIETTPR) has biased composition (low complexity).

It belongs to the CBFA2T family. Homooligomer. Homotetramerization is mediated by nervy homology region 2 (NRH2). Can interact with CBFA2T2 and CBFA2T3; heterotetramerization between members of the CBFA2T family is proposed. Interacts with TCF12, SIN3A, HDAC1, HDAC2, HDAC3, NCOR1, NCOR2. Interacts with ATN1 (via its N-terminus); the interaction enhances the transcriptional repression. Interacts (via its N-terminus) with ZBTB16; the interaction increases the transcription repression activity of ZBTB16. AML1-MTG8/ETO fusion protein interacts with CBFB. AML1-MTG8/ETO is part of a stable transcription factor complex AETFC in leukemic cells; AETFC formation seems to be involved in recruitment of EP300. AML1-MTG8/ETO nervy homology region 2-mediated oligomerization is proposed to be homotypic, required for AML1-MTG8/ETO-mediated transformation of primary hematopoietic cells and is required for AML1-MTG8/ETO interaction with TCF12. Most abundantly expressed in brain. Lower levels in lung, heart, testis and ovary.

It localises to the nucleus. Transcriptional corepressor which facilitates transcriptional repression via its association with DNA-binding transcription factors and recruitment of other corepressors and histone-modifying enzymes. Can repress the expression of MMP7 in a ZBTB33-dependent manner. Can repress transactivation mediated by TCF12. Acts as a negative regulator of adipogenesis. The AML1-MTG8/ETO fusion protein frequently found in leukemic cells is involved in leukemogenesis and contributes to hematopoietic stem/progenitor cell self-renewal. This chain is Protein CBFA2T1 (RUNX1T1), found in Homo sapiens (Human).